A 449-amino-acid chain; its full sequence is UNC93-like protein MFSD11 (449 aa).

A helical membrane pass occupies residues 8-28 (LFNIIILGVAFMFMFTAFQTC). N-linked (GlcNAc...) asparagine glycosylation occurs at N40. Helical transmembrane passes span 53 to 73 (AIIY…VAIV), 74 to 94 (GPQL…AVFN), 96 to 116 (PFPW…AVLW), 138 to 158 (IFWA…YFAW), and 170 to 190 (RTVF…FFLI). S204 carries the post-translational modification Phosphoserine. 6 consecutive transmembrane segments (helical) span residues 239 to 259 (MLLL…FSGV), 277 to 297 (LIGL…SLFG), 309 to 329 (PVVL…FLNM), 359 to 379 (FLLG…LGFL), 385 to 405 (APAF…AFFY), and 410 to 430 (LLHW…LSFF).

This sequence belongs to the unc-93 family.

The protein localises to the membrane. In Pongo abelii (Sumatran orangutan), this protein is UNC93-like protein MFSD11 (MFSD11).